Here is a 474-residue protein sequence, read N- to C-terminus: 3-isopropylmalate dehydratase large subunit (474 aa).

Residues C350, C411, and C414 each coordinate [4Fe-4S] cluster.

The protein belongs to the aconitase/IPM isomerase family. LeuC type 1 subfamily. In terms of assembly, heterodimer of LeuC and LeuD. Requires [4Fe-4S] cluster as cofactor.

The catalysed reaction is (2R,3S)-3-isopropylmalate = (2S)-2-isopropylmalate. It participates in amino-acid biosynthesis; L-leucine biosynthesis; L-leucine from 3-methyl-2-oxobutanoate: step 2/4. In terms of biological role, catalyzes the isomerization between 2-isopropylmalate and 3-isopropylmalate, via the formation of 2-isopropylmaleate. The chain is 3-isopropylmalate dehydratase large subunit from Hydrogenovibrio crunogenus (strain DSM 25203 / XCL-2) (Thiomicrospira crunogena).